Consider the following 248-residue polypeptide: Aspartate/glutamate leucyltransferase (248 aa).

It belongs to the R-transferase family. Bpt subfamily.

It localises to the cytoplasm. It catalyses the reaction N-terminal L-glutamyl-[protein] + L-leucyl-tRNA(Leu) = N-terminal L-leucyl-L-glutamyl-[protein] + tRNA(Leu) + H(+). The enzyme catalyses N-terminal L-aspartyl-[protein] + L-leucyl-tRNA(Leu) = N-terminal L-leucyl-L-aspartyl-[protein] + tRNA(Leu) + H(+). Its function is as follows. Functions in the N-end rule pathway of protein degradation where it conjugates Leu from its aminoacyl-tRNA to the N-termini of proteins containing an N-terminal aspartate or glutamate. The sequence is that of Aspartate/glutamate leucyltransferase from Methylobacterium nodulans (strain LMG 21967 / CNCM I-2342 / ORS 2060).